Here is a 220-residue protein sequence, read N- to C-terminus: Competence protein ComFC (220 aa).

This sequence belongs to the ComF/GntX family. In terms of assembly, monomer and dimer in solution. Interacts with ComFA and DprA; ComFA-ComFC form rings about 150 Angstroms in diameter with apparent 6-fold symmetry.

Functionally, involved in transformation (genetic competence for DNA uptake). The chain is Competence protein ComFC from Streptococcus pneumoniae (strain ATCC BAA-255 / R6).